The sequence spans 78 residues: Acyl carrier protein (78 aa).

Residues 2–77 (SNFEERVKKI…AAIDYVVSSA (76 aa)) enclose the Carrier domain. S37 is modified (O-(pantetheine 4'-phosphoryl)serine).

The protein belongs to the acyl carrier protein (ACP) family. In terms of processing, 4'-phosphopantetheine is transferred from CoA to a specific serine of apo-ACP by AcpS. This modification is essential for activity because fatty acids are bound in thioester linkage to the sulfhydryl of the prosthetic group.

It localises to the cytoplasm. It functions in the pathway lipid metabolism; fatty acid biosynthesis. Carrier of the growing fatty acid chain in fatty acid biosynthesis. Is probably involved in the biosynthesis of docosahexaenoic acid (DHA) which is produced by this bacterium as a fatty acyl component in its membrane lipid. This Moritella marina (Vibrio marinus) protein is Acyl carrier protein.